Reading from the N-terminus, the 132-residue chain is ATP synthase epsilon chain (132 aa).

It belongs to the ATPase epsilon chain family. As to quaternary structure, F-type ATPases have 2 components, CF(1) - the catalytic core - and CF(0) - the membrane proton channel. CF(1) has five subunits: alpha(3), beta(3), gamma(1), delta(1), epsilon(1). CF(0) has three main subunits: a, b and c.

The protein localises to the cell membrane. Produces ATP from ADP in the presence of a proton gradient across the membrane. The polypeptide is ATP synthase epsilon chain (Clostridium kluyveri (strain NBRC 12016)).